Consider the following 906-residue polypeptide: Coatomer subunit beta' (906 aa).

WD repeat units follow at residues 13–52 (ARSD…LVKT), 55–94 (VCDL…RVHM), 97–136 (AHSD…SCSQ), 140–180 (GHTH…PNFT), 183–224 (GHEK…CVQT), 227–266 (GHAQ…LEST), 350–388 (SCEI…NKSF), and 390–425 (SAQE…KSFK). Residue Lys627 is modified to N6-acetyllysine. The stretch at 746–783 (IRTGRLPEAAFLARTYLPSQVSRVVKLWRENLSKVNQK) is one WD 9 repeat. The segment at 837–872 (EEAKGFQPSRSAAQQELDGKPASPTPVIVTSQTANK) is disordered. Residue Ser859 is modified to Phosphoserine. Thr861 is modified (phosphothreonine). A coiled-coil region spans residues 866–891 (TSQTANKEEKSLLELEVDLDNLEIED).

Belongs to the WD repeat COPB2 family. Oligomeric complex that consists of at least the alpha, beta, beta', gamma, delta, epsilon and zeta subunits. Probably interacts with PEX11A. Interacts with SCYL1. Interacts with JAGN1.

Its subcellular location is the cytoplasm. It is found in the cytosol. The protein resides in the golgi apparatus membrane. It localises to the cytoplasmic vesicle. The protein localises to the COPI-coated vesicle membrane. Its function is as follows. The coatomer is a cytosolic protein complex that binds to dilysine motifs and reversibly associates with Golgi non-clathrin-coated vesicles, which further mediate biosynthetic protein transport from the ER, via the Golgi up to the trans Golgi network. Coatomer complex is required for budding from Golgi membranes, and is essential for the retrograde Golgi-to-ER transport of dilysine-tagged proteins. In mammals, the coatomer can only be recruited by membranes associated to ADP-ribosylation factors (ARFs), which are small GTP-binding proteins; the complex also influences the Golgi structural integrity, as well as the processing, activity, and endocytic recycling of LDL receptors. This coatomer complex protein, essential for Golgi budding and vesicular trafficking, is a selective binding protein (RACK) for protein kinase C, epsilon type. It binds to Golgi membranes in a GTP-dependent manner. In Bos taurus (Bovine), this protein is Coatomer subunit beta' (COPB2).